The sequence spans 440 residues: Sequestosome-1 (440 aa).

N-acetylalanine is present on Ala2. Positions 2 to 50 are interaction with LCK; it reads ASLTVKAYLLGKEDAAREIRRFSFCCSPEPEAEAEAAAGPGPCERLLSR. One can recognise a PB1 domain in the interval 3 to 102; it reads SLTVKAYLLG…DIFRIYIKEK (100 aa). A Phosphoserine modification is found at Ser24. Residues 43–107 form an interaction with PRKCZ and dimerization region; sequence PCERLLSRVA…YIKEKKECRR (65 aa). The interaction with PAWR stretch occupies residues 50–80; that stretch reads RVAALFPALRPGGFQAHYRDEDGDLVAFSSD. A Glycyl lysine isopeptide (Lys-Gly) (interchain with G-Cter in ubiquitin) cross-link involves residue Lys91. Positions 122-224 are interaction with GABRR3; the sequence is VHPNVICDGC…EARPGPTAES (103 aa). A ZZ-type zinc finger spans residues 123–173; it reads HPNVICDGCNGPVVGTRYKCSVCPDYDLCSVCEGKGLHRGHTKLAFPSPFG. Zn(2+) contacts are provided by Cys128, Cys131, Cys142, and Cys145. Tyr148 is subject to Phosphotyrosine. Residues Cys151, Cys154, His160, and His163 each coordinate Zn(2+). Phosphoserine occurs at positions 170 and 176. An LIM protein-binding (LB) region spans residues 170-220; that stretch reads SPFGHLSEGFSHSRWLRKVKHGHFGWPGWEMGPPGNWSPRPPRAGEARPGP. A Glycyl lysine isopeptide (Lys-Gly) (interchain with G-Cter in ubiquitin) cross-link involves residue Lys189. Residues 196–235 form a disordered region; the sequence is PGWEMGPPGNWSPRPPRAGEARPGPTAESASGPSEDPSVN. Residues Ser207, Ser233, Ser249, and Ser266 each carry the phosphoserine modification. Positions 228-233 match the TRAF6-binding motif; sequence PSEDPS. Positions 264-390 are disordered; the sequence is KRSRLTPVSP…ALYPHLPPEA (127 aa). Thr269 carries the phosphothreonine modification. An interaction with NTRK1 region spans residues 269-440; that stretch reads TPVSPESSST…IQYSKHPPPL (172 aa). Residues Ser272 and Ser282 each carry the phosphoserine modification. The span at 283–296 shows a compositional bias: low complexity; the sequence is SSQPSSCCSDPSKP. Residues Cys289 and Cys290 are each lipidated (S-palmitoyl cysteine). Ser306 is modified (phosphoserine). The segment covering 310–324 has biased composition (basic and acidic residues); it reads QMRKIALESEGRPEE. An MAP1LC3B-binding region spans residues 321–342; sequence RPEEQMESDNCSGGDDDWTHLS. Residues Ser328 and Ser332 each carry the phosphoserine modification. An LIR motif is present at residues 336 to 341; it reads DDWTHL. Basic and acidic residues predominate over residues 337 to 347; the sequence is DWTHLSSKEVD. The interval 347–352 is interaction with KEAP1; the sequence is DPSTGE. Ser349 is subject to Phosphoserine; by ULK1. Over residues 351–373 the composition is skewed to polar residues; it reads GELQSLQMPESEGPSSLDPSQEG. Phosphoserine is present on residues Ser355, Ser361, Ser365, and Ser366. The UBA domain occupies 389 to 434; it reads EADPRLIESLSQMLSMGFSDEGGWLTRLLQTKNYDIGAALDTIQYS. Position 403 is a phosphoserine; by CK2, ULK1 and TBK1 (Ser403). Ser407 is subject to Phosphoserine; by ULK1. 2 positions are modified to N6-acetyllysine; alternate: Lys420 and Lys435. Lys420 is covalently cross-linked (Glycyl lysine isopeptide (Lys-Gly) (interchain with G-Cter in ubiquitin); alternate). A Glycyl lysine isopeptide (Lys-Gly) (interchain with G-Cter in SUMO2); alternate cross-link involves residue Lys435.

As to quaternary structure, homooligomer or heterooligomer; may form homotypic arrays. Dimerization interferes with ubiquitin binding. Component of a ternary complex with PAWR and PRKCZ. Forms a complex with JUB/Ajuba, PRKCZ and TRAF6. Identified in a complex with TRAF6 and CYLD. Identified in a heterotrimeric complex with ubiquitin and ZFAND5, where ZFAND5 and SQSTM1 both interact with the same ubiquitin molecule. Interacts (via LIR motif) with MAP1LC3A and MAP1LC3B, as well as with other ATG8 family members, including GABARAP, GABARAPL1 and GABARAPL2; these interactions are necessary for the recruitment MAP1 LC3 family members to inclusion bodies containing polyubiquitinated protein aggregates and for their degradation by autophagy. Interacts directly with PRKCI and PRKCZ. Interacts with EBI3, LCK, RASA1, NR2F2, NTRK1, NTRK2, NTRK3, NBR1, MAP2K5 and MAPKAPK5. Upon TNF-alpha stimulation, interacts with RIPK1 probably bridging IKBKB to the TNF-R1 complex composed of TNF-R1/TNFRSF1A, TRADD and RIPK1. Interacts with the proteasome subunits PSMD4 and PSMC2. Interacts with TRAF6. Interacts with 'Lys-63'-linked polyubiquitinated MAPT/TAU. Interacts with FHOD3. Interacts with CYLD. Interacts with SESN1. Interacts with SESN2. Interacts with ULK1. Interacts with UBD. Interacts with WDR81; the interaction is direct and regulates the interaction of SQSTM1 with ubiquitinated proteins. Interacts with WDFY3; this interaction is required to recruit WDFY3 to cytoplasmic bodies and to PML bodies. Interacts with LRRC25. Interacts with STING1; leading to relocalization of STING1 to autophagosomes. Interacts (when phosphorylated at Ser-349) with KEAP1; the interaction is direct and inactivates the BCR(KEAP1) complex by sequestering KEAP1 in inclusion bodies, promoting its degradation. Interacts with MOAP1; promoting dissociation of SQSTM1 inclusion bodies that sequester KEAP1. Interacts with GBP1. Interacts with TAX1BP1. Interacts with (ubiquitinated) PEX5; specifically binds PEX5 ubiquitinated at 'Lys-209' in response to reactive oxygen species (ROS). Interacts (via PB1 domain) with TNS2; the interaction leads to sequestration of TNS2 in cytoplasmic aggregates with SQSTM1 and promotes TNS2 ubiquitination and proteasomal degradation. Interacts with IRS1; the interaction is disrupted by the presence of tensin TNS2. Interacts with TRIM5. Interacts with TRIM11 (when ubiquitinated); promoting AIM2 recruitment to autophagosomes and autophagy-dependent degradation of AIM2. Interacts with TRIM13. Interacts with TRIM16. Interacts with TRIM23. Interacts with TRIM50. Interacts with TRIM55. Interacts with ECSIT; this interaction inhibits TLR4 signaling via functional regulation of the TRAF6-ECSIT complex. Interacts with GABRR1, GABRR2 and GABRR3. Interacts with WDR83. Interacts with GRB2. Interacts with USP12; the interaction is independent of USP12 deubiquitinase activity and may be involved in regulation of autophagic flux. Interacts with ASB6. Phosphorylation at Ser-407 by ULK1 destabilizes the UBA dimer interface and increases binding affinity to ubiquitinated proteins. Phosphorylation at Ser-407 also primes for subsequent phosphorylation at Ser-403. Phosphorylation at Ser-403 by CK2 or ULK1 promotes binding to ubiquitinated proteins by increasing the affinity between the UBA domain and polyubiquitin chains. Phosphorylation at Ser-403 by ULK1 is stimulated by SESN2. Phosphorylated at Ser-403 by TBK1, leading to promote relocalization of 'Lys-63'-linked ubiquitinated STING1 to autophagosomes. Phosphorylation at Ser-349 by ULK1 promotes interaction with KEAP1 and inactivation of the BCR(KEAP1) complex, promoting NFE2L2/NRF2 nuclear accumulation and expression of phase II detoxifying enzymes. Phosphorylated in vitro by TTN. In terms of processing, ubiquitinated by UBE2J1 and RNF26 at Lys-435: ubiquitinated SQSTM1 attracts specific vesicle-associated adapters, forming a molecular bridge that restrains cognate vesicles in the perinuclear region and organizes the endosomal pathway for efficient cargo transport. Ubiquitination by UBE2D2 and UBE2D3 increases its ability to bind polyubiquitin chains by destabilizing the UBA dimer interface. Deubiquitination by USP15 releases target vesicles for fast transport into the cell periphery. Ubiquitinated by the BCR(KEAP1) complex at Lys-420, increasing SQSTM1 sequestering activity and promoting its degradation. Ubiquitinated via 'Lys-29' and 'Lys-33'-linked polyubiquitination leading to xenophagic targeting of bacteria and inhibition of their replication. Post-translationally, acetylated at Lys-420 and Lys-435 by KAT5/TIP60, promotes activity by destabilizing the UBA dimer interface and increases binding affinity to ubiquitinated proteins. Deacetylated by HDAC6. Palmitoylation at Cys-289 and Cys-290 by ZDHHC19 is required for efficient autophagic degradation of SQSTM1-cargo complexes by promoting affinity for ATG8 proteins and recruitment of p62 bodies to autophagosomes. Dealmitoylated at Cys-289 and Cys-290 by LYPLA1. In terms of processing, (Microbial infection) Cleaved by S.pyogenes SpeB protease; leading to its degradation. Degradation by SpeB prevents autophagy, promoting to S.pyogenes intracellular replication. Post-translationally, (Microbial infection) Deubiquitinated by Epstein-Barr virus BPLF1; leading to inhibition of the recruitment of MAP1LC3A/LC3 to SQSTM1-positive structures. In terms of tissue distribution, ubiquitously expressed.

The protein localises to the cytoplasmic vesicle. It is found in the autophagosome. The protein resides in the preautophagosomal structure. It localises to the cytoplasm. Its subcellular location is the cytosol. The protein localises to the nucleus. It is found in the PML body. The protein resides in the late endosome. It localises to the lysosome. Its subcellular location is the endoplasmic reticulum. The protein localises to the myofibril. It is found in the sarcomere. Its function is as follows. Molecular adapter required for selective macroautophagy (aggrephagy) by acting as a bridge between polyubiquitinated proteins and autophagosomes. Promotes the recruitment of ubiquitinated cargo proteins to autophagosomes via multiple domains that bridge proteins and organelles in different steps. SQSTM1 first mediates the assembly and removal of ubiquitinated proteins by undergoing liquid-liquid phase separation upon binding to ubiquitinated proteins via its UBA domain, leading to the formation of insoluble cytoplasmic inclusions, known as p62 bodies. SQSTM1 then interacts with ATG8 family proteins on autophagosomes via its LIR motif, leading to p62 body recruitment to autophagosomes, followed by autophagic clearance of ubiquitinated proteins. SQSTM1 is itself degraded along with its ubiquitinated cargos. Also required to recruit ubiquitinated proteins to PML bodies in the nucleus. Also involved in autophagy of peroxisomes (pexophagy) in response to reactive oxygen species (ROS) by acting as a bridge between ubiquitinated PEX5 receptor and autophagosomes. Acts as an activator of the NFE2L2/NRF2 pathway via interaction with KEAP1: interaction inactivates the BCR(KEAP1) complex by sequestering the complex in inclusion bodies, promoting nuclear accumulation of NFE2L2/NRF2 and subsequent expression of cytoprotective genes. Promotes relocalization of 'Lys-63'-linked ubiquitinated STING1 to autophagosomes. Involved in endosome organization by retaining vesicles in the perinuclear cloud: following ubiquitination by RNF26, attracts specific vesicle-associated adapters, forming a molecular bridge that restrains cognate vesicles in the perinuclear region and organizes the endosomal pathway for efficient cargo transport. Sequesters tensin TNS2 into cytoplasmic puncta, promoting TNS2 ubiquitination and proteasomal degradation. May regulate the activation of NFKB1 by TNF-alpha, nerve growth factor (NGF) and interleukin-1. May play a role in titin/TTN downstream signaling in muscle cells. Adapter that mediates the interaction between TRAF6 and CYLD. The chain is Sequestosome-1 from Homo sapiens (Human).